Reading from the N-terminus, the 436-residue chain is Acetyl-CoA decarbonylase/synthase complex subunit delta 1 (436 aa).

The protein belongs to the CdhD family. As to quaternary structure, heterodimer of delta and gamma chains. The ACDS complex is made up of alpha, epsilon, beta, gamma and delta chains with a probable stoichiometry of (alpha(2)epsilon(2))(4)-beta(8)-(gamma(1)delta(1))(8) (Potential).

It functions in the pathway one-carbon metabolism; methanogenesis from acetate. Functionally, part of a complex that catalyzes the reversible cleavage of acetyl-CoA, allowing growth on acetate as sole source of carbon and energy. Probably maintains the overall quaternary structure of the ACDS complex. The chain is Acetyl-CoA decarbonylase/synthase complex subunit delta 1 (cdhD1) from Methanosarcina thermophila.